A 114-amino-acid polypeptide reads, in one-letter code: Iron-sulfur cluster insertion protein ErpA (114 aa).

The iron-sulfur cluster site is built by Cys42, Cys106, and Cys108.

Belongs to the HesB/IscA family. As to quaternary structure, homodimer. Requires iron-sulfur cluster as cofactor.

Required for insertion of 4Fe-4S clusters for at least IspG. This is Iron-sulfur cluster insertion protein ErpA from Wigglesworthia glossinidia brevipalpis.